The primary structure comprises 578 residues: Avenacosidase 2 (578 aa).

The N-terminal 57 residues, 1-57, are a transit peptide targeting the chloroplast; the sequence is MALLCSALSNSTHPSFRSHIAGANSENLWHLSAHPAQKSKRRCNLTLSSRAAARISS. Residues Q89, H193, and 238 to 239 each bind a beta-D-glucoside; that span reads NE. Catalysis depends on E239, which acts as the Proton donor. C258 and C264 are disulfide-bonded. A beta-D-glucoside contacts are provided by residues Y381, E454, W504, 511–512, and F520; that span reads EW. The Nucleophile role is filled by E454.

Belongs to the glycosyl hydrolase 1 family. In terms of assembly, heteromultimer with P60A in a 1:1 stoichiometry. Aggregates to form the fibrillar stromacentre.

Its subcellular location is the plastid. It localises to the chloroplast stroma. It carries out the reaction avenacoside B + H2O = 26-desgluco-avenacoside B + D-glucose. Beta-glucosidase acting as a preformed defense system. Hydrolyzes the bisdesmosides avenacosides A and B to 26-desgluco-avenacosides exhibiting fungicidal activity. Can use beta-fucoside &gt; beta-glucoside &gt; beta-galactoside &gt; beta-xyloside as substrates, but not alpha-glycosides, beta-thioglucosides and disaccharides. The protein is Avenacosidase 2 (P60B) of Avena sativa (Oat).